The following is a 142-amino-acid chain: Serine protease inhibitor (142 aa).

Ser1 is subject to N-acetylserine.

Serine protease inhibitor. Active against beta-trypsin and alpha-chymotrypsin with dissociation constants of 0.35 nM and 40 nM respectively. Inhibits factor XIa, but not other enzymes involved in coagulation and fibrinolysis. Does not inhibit subtilisin, lysyl endopeptidase, arginyl endopeptidase or papain. This chain is Serine protease inhibitor, found in Lentinula edodes (Shiitake mushroom).